The sequence spans 556 residues: Vacuolar protein 8 (556 aa).

G2 carries N-myristoyl glycine lipidation. S-palmitoyl cysteine attachment occurs at residues C4, C5, and C7. ARM repeat units lie at residues 38–74, 75–115, 117–156, 158–197, 199–238, 242–281, 283–322, 324–364, and 408–447; these read NRSEVDFFTDGPLRALSTLVYSENIDLQRSAALAFAE, VTEK…NLAV, DSNKVLIVNMGGLEPLIRQMMSPNIEVQCNAVGCITNLAT, DQNKSKIATSGALIPLTKLAKSKDLRVQRNATGALLNMTH, LENRQELVNAGSVPILVQLLSSTDPDVQYYCTTALSNIAV, NRKKLASTEPKLISQLVQLMDSTSPRVQCQATLALRNLAS, ANYQLEIVRAGGLPNLVTLLNSTHQPLVLAAVACIRNISI, PLNE…NLAA, and DDLKMKLLDSNIIEVLLPLTSSENGEVCGNAAAALANLCS.

This sequence belongs to the beta-catenin family.

It localises to the vacuole membrane. Its function is as follows. Functions in both vacuole inheritance and protein targeting from the cytoplasm to vacuole. The polypeptide is Vacuolar protein 8 (VAC8) (Komagataella pastoris (Yeast)).